The primary structure comprises 87 residues: U3-theraphotoxin-Hhn1a 5 (87 aa).

The N-terminal stretch at 1–24 is a signal peptide; it reads MVNMKASMFLTFAGLVLLFVVCYA. The propeptide occupies 25–52; it reads SESEEKEFPKEMLSSIFAVDNDFKQEER. Cystine bridges form between cysteine 54-cysteine 67, cysteine 61-cysteine 72, and cysteine 66-cysteine 79.

The protein belongs to the neurotoxin 10 (Hwtx-1) family. 51 (Hntx-8) subfamily. Hntx-8 sub-subfamily. Expressed by the venom gland.

Its subcellular location is the secreted. In terms of biological role, ion channel inhibitor. The polypeptide is U3-theraphotoxin-Hhn1a 5 (Cyriopagopus hainanus (Chinese bird spider)).